The primary structure comprises 383 residues: Lipid-A-disaccharide synthase (383 aa).

It belongs to the LpxB family.

It carries out the reaction 2-N,3-O-bis[(3R)-3-hydroxytetradecanoyl]-alpha-D-glucosaminyl 1-phosphate + UDP-2-N,3-O-bis[(3R)-3-hydroxytetradecanoyl]-alpha-D-glucosamine = lipid A disaccharide (E. coli) + UDP + H(+). The enzyme catalyses a lipid X + a UDP-2-N,3-O-bis[(3R)-3-hydroxyacyl]-alpha-D-glucosamine = a lipid A disaccharide + UDP + H(+). It participates in glycolipid biosynthesis; lipid IV(A) biosynthesis; lipid IV(A) from (3R)-3-hydroxytetradecanoyl-[acyl-carrier-protein] and UDP-N-acetyl-alpha-D-glucosamine: step 5/6. Its function is as follows. Condensation of UDP-2,3-diacylglucosamine and 2,3-diacylglucosamine-1-phosphate to form lipid A disaccharide, a precursor of lipid A, a phosphorylated glycolipid that anchors the lipopolysaccharide to the outer membrane of the cell. This Klebsiella pneumoniae (strain 342) protein is Lipid-A-disaccharide synthase.